Here is a 156-residue protein sequence, read N- to C-terminus: 6,7-dimethyl-8-ribityllumazine synthase (156 aa).

Residues F23, 57–59 (AYE), and 81–83 (AII) each bind 5-amino-6-(D-ribitylamino)uracil. 86-87 (GT) contacts (2S)-2-hydroxy-3-oxobutyl phosphate. Catalysis depends on H89, which acts as the Proton donor. F114 contacts 5-amino-6-(D-ribitylamino)uracil. Residue R128 participates in (2S)-2-hydroxy-3-oxobutyl phosphate binding.

Belongs to the DMRL synthase family.

The catalysed reaction is (2S)-2-hydroxy-3-oxobutyl phosphate + 5-amino-6-(D-ribitylamino)uracil = 6,7-dimethyl-8-(1-D-ribityl)lumazine + phosphate + 2 H2O + H(+). Its pathway is cofactor biosynthesis; riboflavin biosynthesis; riboflavin from 2-hydroxy-3-oxobutyl phosphate and 5-amino-6-(D-ribitylamino)uracil: step 1/2. Catalyzes the formation of 6,7-dimethyl-8-ribityllumazine by condensation of 5-amino-6-(D-ribitylamino)uracil with 3,4-dihydroxy-2-butanone 4-phosphate. This is the penultimate step in the biosynthesis of riboflavin. This Helicobacter pylori (strain HPAG1) protein is 6,7-dimethyl-8-ribityllumazine synthase.